The sequence spans 377 residues: Probable staphylococcal-like nuclease CAN3 (377 aa).

The N-myristoyl glycine moiety is linked to residue Gly-2. Cys-7 carries the S-palmitoyl cysteine lipid modification. The interval 15–57 (GDHYPYYKPTSRPHYQPPHYHGQPAAPPAPPQQQPLGPHGVTP) is disordered. A compositionally biased stretch (low complexity) spans 27-38 (PHYQPPHYHGQP). The TNase-like domain occupies 177–353 (NTLPVYDKCI…KAANRGLWAS (177 aa)). Ca(2+) is bound at residue Asp-190. Arg-260 is a catalytic residue. Asp-265 contributes to the Ca(2+) binding site. Residues Glu-268 and Arg-302 contribute to the active site.

Belongs to the thermonuclease family. The cofactor is Ca(2+).

It is found in the cell membrane. Its function is as follows. Enzyme that catalyzes the hydrolysis of both DNA and RNA at the 5' position of the phosphodiester bond. This is Probable staphylococcal-like nuclease CAN3 from Oryza sativa subsp. japonica (Rice).